We begin with the raw amino-acid sequence, 671 residues long: Putative ubiquitin thioesterase 232R (671 aa).

4 disordered regions span residues 36–62, 100–123, 171–203, and 250–319; these read EIID…RRIS, SPKI…PVRQ, NQKP…RPVF, and EPIR…SKRS. The segment covering 110–123 has biased composition (low complexity); it reads PSPVHSPVRSPVRQ. Pro residues predominate over residues 182 to 200; it reads RRSPSPRRSPSPRRSPSPR. Over residues 255–271 the composition is skewed to low complexity; the sequence is SSSSRSSRSTRRSSSTK. Over residues 272-319 the composition is skewed to basic residues; that stretch reads PSRRSSSRSRRSSSRSRRSSSRSRRSSSRSRRSSRRSTSRSRSLSKRS. An OTU domain is found at 392 to 521; that stretch reads FRMINVPLDG…NFHYIALEPF (130 aa). Residue Asp400 is part of the active site. Cys403 (nucleophile) is an active-site residue. His514 is a catalytic residue. Positions 589–625 are disordered; that stretch reads KRSLRPSIPPKISTEHRRTPKLRPSVPRPSSIRQSQP.

It catalyses the reaction Thiol-dependent hydrolysis of ester, thioester, amide, peptide and isopeptide bonds formed by the C-terminal Gly of ubiquitin (a 76-residue protein attached to proteins as an intracellular targeting signal).. Hydrolase that can remove conjugated ubiquitin from proteins and may therefore play an important regulatory role at the level of protein turnover by preventing degradation. The chain is Putative ubiquitin thioesterase 232R from Acheta domesticus (House cricket).